We begin with the raw amino-acid sequence, 493 residues long: MTRALCSALRQALLLLAAAAELSPGLKCVCLLCDSSNFTCQTEGACWASVMLTNGKEQVIKSCVSLPELNAQVFCHSSNNVTKTECCFTDFCNNITLHLPTASPNAPKLGPMELAIIITVPVCLLSIAAMLTVWACQGRQCSYRKKKRPNVEEPLSECNLVNAGKTLKDLIYDVTASGSGSGLPLLVQRTIARTIVLQEIVGKGRFGEVWHGRWCGEDVAVKIFSSRDERSWFREAEIYQTVMLRHENILGFIAADNKDNGTWTQLWLVSEYHEQGSLYDYLNRNIVTVAGMIKLALSIASGLAHLHMEIVGTQGKPAIAHRDIKSKNILVKKCETCAIADLGLAVKHDSILNTIDIPQNPKVGTKRYMAPEMLDDTMNVNIFESFKRADIYSVGLVYWEIARRCSVGGIVEEYQLPYYDMVPSDPSIEEMRKVVCDQKFRPSIPNQWQSCEALRVMGRIMRECWYANGAARLTALRIKKTISQLCVKEDCKA.

The first 20 residues, 1 to 20 (MTRALCSALRQALLLLAAAA), serve as a signal peptide directing secretion. The Extracellular segment spans residues 22 to 113 (LSPGLKCVCL…PNAPKLGPME (92 aa)). The helical transmembrane segment at 114-134 (LAIIITVPVCLLSIAAMLTVW) threads the bilayer. Residues 135–493 (ACQGRQCSYR…QLCVKEDCKA (359 aa)) lie on the Cytoplasmic side of the membrane. Positions 165–194 (KTLKDLIYDVTASGSGSGLPLLVQRTIART) constitute a GS domain. In terms of domain architecture, Protein kinase spans 195–485 (IVLQEIVGKG…LRIKKTISQL (291 aa)). ATP is bound by residues 201–209 (VGKGRFGEV) and Lys222. The active-site Proton acceptor is Asp323.

This sequence belongs to the protein kinase superfamily. TKL Ser/Thr protein kinase family. TGFB receptor subfamily. In terms of assembly, binds the type 2 receptor protein ACVR2A. It depends on Mg(2+) as a cofactor. The cofactor is Mn(2+). Present in pancreas, heart, colon, small intestine, ovary and the hippocampus, medulla oblongata and putamen of the brain. Isoform 1, isoform 2, isoform 3 and isoform 4 are all expressed in the placenta throughout pregnancy.

It localises to the membrane. The catalysed reaction is L-threonyl-[receptor-protein] + ATP = O-phospho-L-threonyl-[receptor-protein] + ADP + H(+). It carries out the reaction L-seryl-[receptor-protein] + ATP = O-phospho-L-seryl-[receptor-protein] + ADP + H(+). Serine/threonine protein kinase which forms a receptor complex on ligand binding. The receptor complex consists of 2 type II and 2 type I transmembrane serine/threonine kinases. Type II receptors phosphorylate and activate type I receptors which autophosphorylate, then bind and activate SMAD transcriptional regulators, SMAD2 and SMAD3. Receptor for activin AB, activin B, activin E and NODAL. Upon NODAL binding, activation results in increased apoptosis and reduced proliferation through suppression of AKT signaling and the activation of Smad2-dependent signaling pathway in pancreatic beta-cells, trophoblasts, epithelial or neuronal cells. Acts as a positive regulator for macrophage activation partially through down-regulation of PPARG expression. This chain is Activin receptor type-1C, found in Homo sapiens (Human).